A 64-amino-acid chain; its full sequence is Large ribosomal subunit protein bL35 (64 aa).

2 disordered regions span residues 1 to 20 (MPKAKTHSGASKRFRRTGTG) and 37 to 64 (PTKRTRRLAGRTQVSANDAPRINKMLNG).

Belongs to the bacterial ribosomal protein bL35 family.

This is Large ribosomal subunit protein bL35 from Mycobacterium sp. (strain JLS).